The sequence spans 251 residues: Pyrroloquinoline-quinone synthase (251 aa).

The protein belongs to the PqqC family.

It catalyses the reaction 6-(2-amino-2-carboxyethyl)-7,8-dioxo-1,2,3,4,7,8-hexahydroquinoline-2,4-dicarboxylate + 3 O2 = pyrroloquinoline quinone + 2 H2O2 + 2 H2O + H(+). The protein operates within cofactor biosynthesis; pyrroloquinoline quinone biosynthesis. In terms of biological role, ring cyclization and eight-electron oxidation of 3a-(2-amino-2-carboxyethyl)-4,5-dioxo-4,5,6,7,8,9-hexahydroquinoline-7,9-dicarboxylic-acid to PQQ. The sequence is that of Pyrroloquinoline-quinone synthase from Pseudomonas entomophila (strain L48).